Consider the following 131-residue polypeptide: Agouti-signaling protein (131 aa).

The first 22 residues, 1–22 (MDVTRLLLATLVGFLCFFTVHS), serve as a signal peptide directing secretion. N39 is a glycosylation site (N-linked (GlcNAc...) asparagine). Positions 58 to 100 (KSKKISRKEAEKRKRSSKKKASMKKVARPPPPSPCVATRDSCK) are disordered. Residues 70–84 (RKRSSKKKASMKKVA) are compositionally biased toward basic residues. 5 disulfides stabilise this stretch: C92/C107, C99/C113, C106/C124, C110/C131, and C115/C122. Residues 92–131 (CVATRDSCKPPAPACCDPCASCQCRFFGSACTCRVLNPNC) enclose the Agouti domain.

Epithelial cells of the hair follicles and the epidermis.

It localises to the secreted. In terms of biological role, involved in the regulation of melanogenesis. The binding of ASP to MC1R precludes alpha-MSH initiated signaling and thus blocks production of cAMP, leading to a down-regulation of eumelanogenesis (brown/black pigment) and thus increasing synthesis of pheomelanin (yellow/red pigment). Causes hair follicle melanocytes to synthesize phaeomelanin instead of black or brown pigment eumelanin and produces hairs with a subapical yellow band on an otherwise black or brown background when expressed during the mid-portion of hair growth. This Mus musculus (Mouse) protein is Agouti-signaling protein (Asip).